A 147-amino-acid polypeptide reads, in one-letter code: MAKEVAGLIKLQIKGGAANPSPPVGPALGSKGINIMEFCKQFNARTQDKAGKILPVIITYYADKSFDFVIKTPPVAIQLLEVAKVKSGSAEPNRKKVAELTWEQIRTIAQDKMVDLNCFTVDAAMRMVAGTARSMGIAVKGEFPVNN.

The protein belongs to the universal ribosomal protein uL11 family. In terms of assembly, part of the ribosomal stalk of the 50S ribosomal subunit. Interacts with L10 and the large rRNA to form the base of the stalk. L10 forms an elongated spine to which L12 dimers bind in a sequential fashion forming a multimeric L10(L12)X complex. One or more lysine residues are methylated.

Its function is as follows. Forms part of the ribosomal stalk which helps the ribosome interact with GTP-bound translation factors. The sequence is that of Large ribosomal subunit protein uL11 from Bacteroides thetaiotaomicron (strain ATCC 29148 / DSM 2079 / JCM 5827 / CCUG 10774 / NCTC 10582 / VPI-5482 / E50).